The chain runs to 275 residues: Acetyl-coenzyme A carboxylase carboxyl transferase subunit beta (275 aa).

Residues 21 to 275 (GLWIKCQCGA…IKIIGMHQAG (255 aa)) form the CoA carboxyltransferase N-terminal domain. Zn(2+)-binding residues include Cys26, Cys28, Cys44, and Cys47. A C4-type zinc finger spans residues 26–47 (CQCGAILFAKDLERNLKVCQKC).

It belongs to the AccD/PCCB family. In terms of assembly, acetyl-CoA carboxylase is a heterohexamer composed of biotin carboxyl carrier protein (AccB), biotin carboxylase (AccC) and two subunits each of ACCase subunit alpha (AccA) and ACCase subunit beta (AccD). It depends on Zn(2+) as a cofactor.

It localises to the cytoplasm. It catalyses the reaction N(6)-carboxybiotinyl-L-lysyl-[protein] + acetyl-CoA = N(6)-biotinyl-L-lysyl-[protein] + malonyl-CoA. It participates in lipid metabolism; malonyl-CoA biosynthesis; malonyl-CoA from acetyl-CoA: step 1/1. Its function is as follows. Component of the acetyl coenzyme A carboxylase (ACC) complex. Biotin carboxylase (BC) catalyzes the carboxylation of biotin on its carrier protein (BCCP) and then the CO(2) group is transferred by the transcarboxylase to acetyl-CoA to form malonyl-CoA. This Desulforudis audaxviator (strain MP104C) protein is Acetyl-coenzyme A carboxylase carboxyl transferase subunit beta.